The following is a 315-amino-acid chain: tRNA dimethylallyltransferase (315 aa).

Glycine 10–threonine 17 serves as a coordination point for ATP. Threonine 12–threonine 17 contacts substrate. The interaction with substrate tRNA stretch occupies residues aspartate 35–glutamine 38.

Belongs to the IPP transferase family. As to quaternary structure, monomer. Mg(2+) serves as cofactor.

It catalyses the reaction adenosine(37) in tRNA + dimethylallyl diphosphate = N(6)-dimethylallyladenosine(37) in tRNA + diphosphate. Catalyzes the transfer of a dimethylallyl group onto the adenine at position 37 in tRNAs that read codons beginning with uridine, leading to the formation of N6-(dimethylallyl)adenosine (i(6)A). The sequence is that of tRNA dimethylallyltransferase from Geobacillus thermodenitrificans (strain NG80-2).